Here is a 474-residue protein sequence, read N- to C-terminus: Serine--tRNA ligase (474 aa).

278–280 (TAE) lines the L-serine pocket. 309 to 311 (RSE) contributes to the ATP binding site. Residue Glu332 participates in L-serine binding. 396 to 399 (EISS) provides a ligand contact to ATP. Ser432 contacts L-serine.

This sequence belongs to the class-II aminoacyl-tRNA synthetase family. Type-1 seryl-tRNA synthetase subfamily. Homodimer. The tRNA molecule binds across the dimer.

The protein localises to the cytoplasm. It catalyses the reaction tRNA(Ser) + L-serine + ATP = L-seryl-tRNA(Ser) + AMP + diphosphate + H(+). The catalysed reaction is tRNA(Sec) + L-serine + ATP = L-seryl-tRNA(Sec) + AMP + diphosphate + H(+). Its pathway is aminoacyl-tRNA biosynthesis; selenocysteinyl-tRNA(Sec) biosynthesis; L-seryl-tRNA(Sec) from L-serine and tRNA(Sec): step 1/1. In terms of biological role, catalyzes the attachment of serine to tRNA(Ser). Is also able to aminoacylate tRNA(Sec) with serine, to form the misacylated tRNA L-seryl-tRNA(Sec), which will be further converted into selenocysteinyl-tRNA(Sec). The polypeptide is Serine--tRNA ligase (Caulobacter sp. (strain K31)).